The following is a 349-amino-acid chain: Isopentenyl-diphosphate delta-isomerase (349 aa).

9 to 10 (RK) contacts substrate. FMN-binding positions include 65-67 (AMT), serine 95, and asparagine 124. 95 to 97 (STH) lines the substrate pocket. Position 154 (glutamine 154) interacts with substrate. Glutamate 155 is a Mg(2+) binding site. FMN contacts are provided by residues lysine 186, serine 211, threonine 216, 262–264 (GLR), and 283–284 (SR).

The protein belongs to the IPP isomerase type 2 family. Homooctamer. Dimer of tetramers. Requires FMN as cofactor. NADPH is required as a cofactor. The cofactor is Mg(2+).

The protein resides in the cytoplasm. It carries out the reaction isopentenyl diphosphate = dimethylallyl diphosphate. Its function is as follows. Involved in the biosynthesis of isoprenoids. Catalyzes the 1,3-allylic rearrangement of the homoallylic substrate isopentenyl (IPP) to its allylic isomer, dimethylallyl diphosphate (DMAPP). The sequence is that of Isopentenyl-diphosphate delta-isomerase from Staphylococcus aureus.